Consider the following 598-residue polypeptide: Glutamine--fructose-6-phosphate aminotransferase [isomerizing] (598 aa).

Residue C2 is the Nucleophile; for GATase activity of the active site. Residues 2–219 (CGIIGYIGPR…DGEYGIVSKD (218 aa)) form the Glutamine amidotransferase type-2 domain. SIS domains follow at residues 280–420 (VAEL…LVGI) and 449–588 (IAVK…PDRP). The For Fru-6P isomerization activity role is filled by K593.

In terms of assembly, homodimer.

The protein localises to the cytoplasm. The catalysed reaction is D-fructose 6-phosphate + L-glutamine = D-glucosamine 6-phosphate + L-glutamate. Catalyzes the first step in hexosamine metabolism, converting fructose-6P into glucosamine-6P using glutamine as a nitrogen source. The sequence is that of Glutamine--fructose-6-phosphate aminotransferase [isomerizing] from Pyrococcus horikoshii (strain ATCC 700860 / DSM 12428 / JCM 9974 / NBRC 100139 / OT-3).